Consider the following 473-residue polypeptide: Photosystem II CP43 reaction center protein (473 aa).

A propeptide spanning residues 1–14 is cleaved from the precursor; sequence MKTLYSLRRFYPVE. Thr-15 is modified (N-acetylthreonine). At Thr-15 the chain carries Phosphothreonine. 5 helical membrane passes run 69–93, 134–155, 178–200, 255–275, and 291–312; these read LFEVAHFVPEKPMYEQGLILLPHLA, LLGPETLEESFPFFGYVWKDRN, KALYFGGVYDTWAPGGGDVRRIT, KPFAWARRAFVWSGEAYLSYS, and WFNNTAYPSEFYGPTGPEASQA. Glu-367 lines the [CaMn4O5] cluster pocket. Residues 447-471 traverse the membrane as a helical segment; the sequence is RARAAAAGFEKGIDRDFEPVLFMTP.

Belongs to the PsbB/PsbC family. PsbC subfamily. As to quaternary structure, PSII is composed of 1 copy each of membrane proteins PsbA, PsbB, PsbC, PsbD, PsbE, PsbF, PsbH, PsbI, PsbJ, PsbK, PsbL, PsbM, PsbT, PsbX, PsbY, PsbZ, Psb30/Ycf12, at least 3 peripheral proteins of the oxygen-evolving complex and a large number of cofactors. It forms dimeric complexes. Requires Binds multiple chlorophylls and provides some of the ligands for the Ca-4Mn-5O cluster of the oxygen-evolving complex. It may also provide a ligand for a Cl- that is required for oxygen evolution. PSII binds additional chlorophylls, carotenoids and specific lipids. as cofactor.

It is found in the plastid. The protein resides in the chloroplast thylakoid membrane. Its function is as follows. One of the components of the core complex of photosystem II (PSII). It binds chlorophyll and helps catalyze the primary light-induced photochemical processes of PSII. PSII is a light-driven water:plastoquinone oxidoreductase, using light energy to abstract electrons from H(2)O, generating O(2) and a proton gradient subsequently used for ATP formation. In Nuphar advena (Common spatterdock), this protein is Photosystem II CP43 reaction center protein.